A 393-amino-acid chain; its full sequence is Putative competence-damage inducible protein (393 aa).

It belongs to the CinA family.

The protein is Putative competence-damage inducible protein of Streptococcus suis (strain 05ZYH33).